The chain runs to 572 residues: Butyrate--CoA ligase AAE11, peroxisomal (572 aa).

Residues 570–572 (SRL) carry the Microbody targeting signal motif.

This sequence belongs to the ATP-dependent AMP-binding enzyme family. Expressed in flowers.

It localises to the peroxisome. It catalyses the reaction a medium-chain fatty acid + ATP + CoA = a medium-chain fatty acyl-CoA + AMP + diphosphate. Its function is as follows. Butyrate--CoA ligase that is active in vitro with medium-chain fatty acids, with a preference for hexanoate and octanoate. This is Butyrate--CoA ligase AAE11, peroxisomal (AAE11) from Arabidopsis thaliana (Mouse-ear cress).